Reading from the N-terminus, the 140-residue chain is Methylglyoxal synthase (140 aa).

An MGS-like domain is found at 1 to 140; the sequence is MKIALIAHDR…HDQDSNPINL (140 aa). Substrate contacts are provided by residues histidine 8, lysine 12, 34-37, and 54-55; these read TGTT and SG. Aspartate 60 functions as the Proton donor/acceptor in the catalytic mechanism. Histidine 87 lines the substrate pocket.

This sequence belongs to the methylglyoxal synthase family.

The catalysed reaction is dihydroxyacetone phosphate = methylglyoxal + phosphate. Catalyzes the formation of methylglyoxal from dihydroxyacetone phosphate. The polypeptide is Methylglyoxal synthase (Latilactobacillus sakei subsp. sakei (strain 23K) (Lactobacillus sakei subsp. sakei)).